The chain runs to 434 residues: ATP-dependent RNA helicase RhlB (434 aa).

The Q motif signature appears at 9 to 37 (KKFADFPLKPEILAALNENGFEFCTPIQA). The Helicase ATP-binding domain occupies 40–219 (LPILLNAKDI…YDHMNDPEKV (180 aa)). 53-60 (AQTGTGKT) is a binding site for ATP. Positions 165-168 (DEAD) match the DEAD box motif. Positions 243 to 390 (KMRLLLSLIE…VSNYDKDALL (148 aa)) constitute a Helicase C-terminal domain. Positions 390–434 (LDDIPPPARIHRKPPTSRTRDGGSKGAHRSGGNTSRPPRHRTRRP) are disordered.

This sequence belongs to the DEAD box helicase family. RhlB subfamily. Component of the RNA degradosome, which is a multiprotein complex involved in RNA processing and mRNA degradation.

It is found in the cytoplasm. It carries out the reaction ATP + H2O = ADP + phosphate + H(+). In terms of biological role, DEAD-box RNA helicase involved in RNA degradation. Has RNA-dependent ATPase activity and unwinds double-stranded RNA. In Shewanella frigidimarina (strain NCIMB 400), this protein is ATP-dependent RNA helicase RhlB.